The following is a 421-amino-acid chain: ATP-dependent RNA helicase RhlB (421 aa).

The short motif at 9–37 (QKFSDFALHPQVVEALEKKGFYNCTPIQA) is the Q motif element. In terms of domain architecture, Helicase ATP-binding spans 40 to 219 (LPLTLAGRDV…FEQMNNAEYV (180 aa)). 53–60 (AQTGTGKT) is an ATP binding site. Residues 165–168 (DEAD) carry the DEAD box motif. One can recognise a Helicase C-terminal domain in the interval 245-390 (RLLQTLIEEE…VSKYNPEALM (146 aa)). The tract at residues 396–421 (PLRLTRSRPGNGPRRAGAPRNRRRSG) is disordered. Low complexity predominate over residues 402-414 (SRPGNGPRRAGAP).

It belongs to the DEAD box helicase family. RhlB subfamily. In terms of assembly, component of the RNA degradosome, which is a multiprotein complex involved in RNA processing and mRNA degradation.

It is found in the cytoplasm. It catalyses the reaction ATP + H2O = ADP + phosphate + H(+). Functionally, DEAD-box RNA helicase involved in RNA degradation. Has RNA-dependent ATPase activity and unwinds double-stranded RNA. The polypeptide is ATP-dependent RNA helicase RhlB (Salmonella agona (strain SL483)).